The primary structure comprises 279 residues: Tryptophan synthase alpha chain (279 aa).

Active-site proton acceptor residues include Glu-50 and Asp-61.

This sequence belongs to the TrpA family. In terms of assembly, tetramer of two alpha and two beta chains.

The enzyme catalyses (1S,2R)-1-C-(indol-3-yl)glycerol 3-phosphate + L-serine = D-glyceraldehyde 3-phosphate + L-tryptophan + H2O. It functions in the pathway amino-acid biosynthesis; L-tryptophan biosynthesis; L-tryptophan from chorismate: step 5/5. Its function is as follows. The alpha subunit is responsible for the aldol cleavage of indoleglycerol phosphate to indole and glyceraldehyde 3-phosphate. The chain is Tryptophan synthase alpha chain from Brucella anthropi (strain ATCC 49188 / DSM 6882 / CCUG 24695 / JCM 21032 / LMG 3331 / NBRC 15819 / NCTC 12168 / Alc 37) (Ochrobactrum anthropi).